The primary structure comprises 205 residues: Pre-rRNA-processing protein TSR2 (205 aa).

The interval 144–205 is disordered; the sequence is SKRVVHIEGD…LVQPKGRRKH (62 aa). The span at 152 to 177 shows a compositional bias: acidic residues; it reads GDDDEDDEDVEDYDDEDEDEEMDEVV.

This sequence belongs to the TSR2 family. Interacts with RPS26A.

It localises to the cytoplasm. The protein resides in the nucleus. Functionally, required for 20S pre-rRNA processing. The chain is Pre-rRNA-processing protein TSR2 from Saccharomyces cerevisiae (strain ATCC 204508 / S288c) (Baker's yeast).